A 360-amino-acid polypeptide reads, in one-letter code: Hereditary hemochromatosis protein homolog (360 aa).

A signal peptide spans 1–25 (MDRSAGLPVRLLLLLLLLLLWSVAP). The tract at residues 26-127 (QALRPGSHSL…KVTKLRVVPE (102 aa)) is alpha-1. Residues 26 to 319 (QALRPGSHSL…WEPSRSQDMI (294 aa)) are Extracellular-facing. N-linked (GlcNAc...) asparagine glycans are attached at residues Asn115, Asn143, Asn167, and Asn247. An alpha-2 region spans residues 128–218 (SHILQVILGC…ELQRGVLGQQ (91 aa)). 2 disulfides stabilise this stretch: Cys137–Cys200 and Cys238–Cys295. The tract at residues 219 to 310 (VPTLVKVTRH…GLDQPLTATW (92 aa)) is alpha-3. The 90-residue stretch at 220–309 (PTLVKVTRHW…PGLDQPLTAT (90 aa)) folds into the Ig-like C1-type domain. Residues 311-319 (EPSRSQDMI) are connecting peptide. The chain crosses the membrane as a helical span at residues 320 to 340 (IGIISGITICAIFFVGILILV). Over 341–360 (LRKRKVSGGTMGDYVLTECE) the chain is Cytoplasmic.

It belongs to the MHC class I family. Binds TFR through the extracellular domain in a pH-dependent manner.

It is found in the cell membrane. Its function is as follows. Binds to transferrin receptor (TFR) and reduces its affinity for iron-loaded transferrin. This is Hereditary hemochromatosis protein homolog (Hfe) from Rattus norvegicus (Rat).